Reading from the N-terminus, the 661-residue chain is UvrABC system protein B (661 aa).

One can recognise a Helicase ATP-binding domain in the interval 25–182 (AGLSSKKRSQ…NDLINLQYER (158 aa)). Residue 38–45 (GITGSGKT) participates in ATP binding. The short motif at 91 to 114 (YYDYYQPEAYIARTDTFIEKDSSI) is the Beta-hairpin element. The Helicase C-terminal domain occupies 430–592 (QIEDLISEIQ…IIPKTINRTI (163 aa)). One can recognise a UVR domain in the interval 621 to 656 (KTHIDKLKKEMLKAASNLEFEQAAKLRDQLKTLEEA).

Belongs to the UvrB family. In terms of assembly, forms a heterotetramer with UvrA during the search for lesions. Interacts with UvrC in an incision complex.

The protein resides in the cytoplasm. The UvrABC repair system catalyzes the recognition and processing of DNA lesions. A damage recognition complex composed of 2 UvrA and 2 UvrB subunits scans DNA for abnormalities. Upon binding of the UvrA(2)B(2) complex to a putative damaged site, the DNA wraps around one UvrB monomer. DNA wrap is dependent on ATP binding by UvrB and probably causes local melting of the DNA helix, facilitating insertion of UvrB beta-hairpin between the DNA strands. Then UvrB probes one DNA strand for the presence of a lesion. If a lesion is found the UvrA subunits dissociate and the UvrB-DNA preincision complex is formed. This complex is subsequently bound by UvrC and the second UvrB is released. If no lesion is found, the DNA wraps around the other UvrB subunit that will check the other stand for damage. The chain is UvrABC system protein B from Rickettsia massiliae (strain Mtu5).